The chain runs to 185 residues: GYLGAPAVVAPGAPLAARGYAAPAYAAPLARYAAPVARAYAAPVARAYAPAVAATPAAVEYDPHPQYSFAYNVQDAHTGDSKTQHESRDGDVVQGSYSLAEPDGSIRTVDYTADPVNGFNAVVHKEAGAHPAAAPVAVAAPVAHAPVAVAAPVRAYAAPLARAAYAAPIARAAYGPALAYGGAYH.

6 tandem repeats follow at residues 21–24 (AAPA), 33–36 (AAPV), 41–44 (AAPV), 133–136 (AAPV), 139–142 (AAPV), and 150–153 (AAPV). The 71-residue stretch at 64–134 (HPQYSFAYNV…KEAGAHPAAA (71 aa)) folds into the Chitin-binding type R&amp;R domain.

Its function is as follows. Component of the cuticle of migratory locust which contains more than 100 different structural proteins. The protein is Cuticle protein 18.6, isoform B of Locusta migratoria (Migratory locust).